The sequence spans 262 residues: Acyl-[acyl-carrier-protein]--UDP-N-acetylglucosamine O-acyltransferase (262 aa).

Belongs to the transferase hexapeptide repeat family. LpxA subfamily. As to quaternary structure, homotrimer.

It localises to the cytoplasm. It catalyses the reaction a (3R)-hydroxyacyl-[ACP] + UDP-N-acetyl-alpha-D-glucosamine = a UDP-3-O-[(3R)-3-hydroxyacyl]-N-acetyl-alpha-D-glucosamine + holo-[ACP]. It functions in the pathway glycolipid biosynthesis; lipid IV(A) biosynthesis; lipid IV(A) from (3R)-3-hydroxytetradecanoyl-[acyl-carrier-protein] and UDP-N-acetyl-alpha-D-glucosamine: step 1/6. In terms of biological role, involved in the biosynthesis of lipid A, a phosphorylated glycolipid that anchors the lipopolysaccharide to the outer membrane of the cell. In Shigella boydii serotype 18 (strain CDC 3083-94 / BS512), this protein is Acyl-[acyl-carrier-protein]--UDP-N-acetylglucosamine O-acyltransferase.